The following is a 364-amino-acid chain: Large ribosomal subunit protein bL27m (364 aa).

Residues 1–19 constitute a mitochondrion transit peptide; sequence MFSSSWQQVPKFVVQQVRT.

Belongs to the bacterial ribosomal protein bL27 family.

The protein localises to the mitochondrion. Its function is as follows. Component of the large subunit of mitochondrial ribosome. This is Large ribosomal subunit protein bL27m (MRPL2) from Kluyveromyces lactis (strain ATCC 8585 / CBS 2359 / DSM 70799 / NBRC 1267 / NRRL Y-1140 / WM37) (Yeast).